Reading from the N-terminus, the 883-residue chain is Phosphoenolpyruvate carboxylase (883 aa).

Residues His-138 and Lys-546 contribute to the active site.

It belongs to the PEPCase type 1 family. Homotetramer. The cofactor is Mg(2+).

It carries out the reaction oxaloacetate + phosphate = phosphoenolpyruvate + hydrogencarbonate. The enzyme has distinct binding sites for each of the allosteric effectors such as acetyl-CoA, fructose 1,6-bisphosphate, guanosine 3'-diphosphate 5'-diphosphate, long chain fatty acids, and L-aspartate. Forms oxaloacetate, a four-carbon dicarboxylic acid source for the tricarboxylic acid cycle. The protein is Phosphoenolpyruvate carboxylase of Escherichia coli O157:H7.